Here is a 414-residue protein sequence, read N- to C-terminus: 25-hydroxycholesterol 7-alpha-hydroxylase (414 aa).

Cysteine 354 serves as a coordination point for heme.

This sequence belongs to the cytochrome P450 family. Requires heme as cofactor. Highly expressed in brain; also expressed in liver and kidney.

It localises to the endoplasmic reticulum membrane. The protein localises to the microsome membrane. The enzyme catalyses 25-hydroxycholesterol + reduced [NADPH--hemoprotein reductase] + O2 = 7alpha,25-dihydroxycholesterol + oxidized [NADPH--hemoprotein reductase] + H2O + H(+). The catalysed reaction is (25R)-cholest-5-ene-3beta,26-diol + reduced [NADPH--hemoprotein reductase] + O2 = (25R)-cholest-5-en-3beta,7alpha,26-triol + oxidized [NADPH--hemoprotein reductase] + H2O + H(+). Its pathway is lipid metabolism; bile acid biosynthesis. Oxysterol 7alpha-hydroxylase that mediates formation of 7-alpha,25-dihydroxycholesterol (7-alpha,25-OHC) from 25-hydroxycholesterol. Plays a key role in cell positioning and movement in lymphoid tissues: 7-alpha,25-dihydroxycholesterol (7-alpha,25-OHC) acts as a ligand for the G protein-coupled receptor GPR183/EBI2, a chemotactic receptor for a number of lymphoid cells. The protein is 25-hydroxycholesterol 7-alpha-hydroxylase (Cyp7b1) of Rattus norvegicus (Rat).